The following is a 325-amino-acid chain: Electron transfer flavoprotein subunit alpha (325 aa).

262 to 290 is an FAD binding site; sequence LYIACGISGAIQHLAGMSNSKVIVAINKD.

The protein belongs to the ETF alpha-subunit/FixB family. As to quaternary structure, heterodimer of an alpha and a beta subunit. It depends on FAD as a cofactor.

The electron transfer flavoprotein serves as a specific electron acceptor for other dehydrogenases. It transfers the electrons to the main respiratory chain via ETF-ubiquinone oxidoreductase (ETF dehydrogenase). The chain is Electron transfer flavoprotein subunit alpha (etfA) from Bacillus subtilis (strain 168).